The chain runs to 76 residues: MFDKLKEIIADKLSVNEDEITMESTFIDDLGADSLDIVELIMALEEELEMEIPDEDAEGFKTVGDVVEYITEHTEK.

Positions 1–74 (MFDKLKEIIA…DVVEYITEHT (74 aa)) constitute a Carrier domain. Ser-34 bears the O-(pantetheine 4'-phosphoryl)serine mark.

The protein belongs to the acyl carrier protein (ACP) family. In terms of processing, 4'-phosphopantetheine is transferred from CoA to a specific serine of apo-ACP by AcpS. This modification is essential for activity because fatty acids are bound in thioester linkage to the sulfhydryl of the prosthetic group.

It localises to the cytoplasm. Its pathway is lipid metabolism; fatty acid biosynthesis. In terms of biological role, carrier of the growing fatty acid chain in fatty acid biosynthesis. The chain is Acyl carrier protein from Clostridium perfringens (strain ATCC 13124 / DSM 756 / JCM 1290 / NCIMB 6125 / NCTC 8237 / Type A).